We begin with the raw amino-acid sequence, 211 residues long: Somatotropin (211 aa).

The N-terminal stretch at 1–23 (MASGFLLCPVLLAVFFMSPVEVG) is a signal peptide. Residue His-40 coordinates Zn(2+). An intrachain disulfide couples Cys-73 to Cys-184. Residue Glu-193 coordinates Zn(2+). Cys-201 and Cys-209 are disulfide-bonded.

The protein belongs to the somatotropin/prolactin family.

It is found in the secreted. Growth hormone plays an important role in growth control and is involved in the regulation of several anabolic processes. Implicated as an osmoregulatory substance important for seawater adaptation. This Lepisosteus osseus (Long-nosed gar) protein is Somatotropin (gh).